A 278-amino-acid polypeptide reads, in one-letter code: Urease accessory protein UreD 1 (278 aa).

Belongs to the UreD family. UreD, UreF and UreG form a complex that acts as a GTP-hydrolysis-dependent molecular chaperone, activating the urease apoprotein by helping to assemble the nickel containing metallocenter of UreC. The UreE protein probably delivers the nickel.

The protein localises to the cytoplasm. Required for maturation of urease via the functional incorporation of the urease nickel metallocenter. This chain is Urease accessory protein UreD 1, found in Bradyrhizobium sp. (strain ORS 278).